Consider the following 141-residue polypeptide: Hemoglobin subunit alpha-A (141 aa).

Residues 1 to 141 (VLSPADKSNV…VGTVLTAKYR (141 aa)) form the Globin domain. Histidine 58 provides a ligand contact to O2. A heme b-binding site is contributed by histidine 87.

This sequence belongs to the globin family. As to quaternary structure, heterotetramer of two alpha chains and two beta chains. As to expression, red blood cells.

In terms of biological role, involved in oxygen transport from the lung to the various peripheral tissues. This is Hemoglobin subunit alpha-A (HBAA) from Passer montanus (Eurasian tree sparrow).